Here is a 173-residue protein sequence, read N- to C-terminus: Translation initiation factor IF-3 (173 aa).

This sequence belongs to the IF-3 family. In terms of assembly, monomer.

It localises to the cytoplasm. In terms of biological role, IF-3 binds to the 30S ribosomal subunit and shifts the equilibrium between 70S ribosomes and their 50S and 30S subunits in favor of the free subunits, thus enhancing the availability of 30S subunits on which protein synthesis initiation begins. This is Translation initiation factor IF-3 from Methylorubrum extorquens (strain CM4 / NCIMB 13688) (Methylobacterium extorquens).